Consider the following 344-residue polypeptide: MSNSFNDTFLKACKGEVHDHVPVWYMRQAGRSQPEYRKIKEKYSLFEITKQPELCAYVTKLPVDQYNNDAAILYKDIMTPLPFIGVDVEIKTGKGPVIDNPIQSYADVERLGTIQPEEDVPYVLDTIKLLREQLTVPLISFAGAPFTLASYMIEGGPSKSYNKTKAFMYAEPKAWHLLMDKLGEMTITYVKAQIAAGAQAIQIFDSWVGTLNVQDYRVFVKPVMERTFSELQKEKVPLIMFGVGASHLVNEWNDLPLDVVGLDWRLQIKEARELGVTKTVQGNLDPAILLAPWEVIEARAKEILDQGLETPNFIFNLGHGVFPEVEPDTLKRLTAFVHEYSANN.

Substrate contacts are provided by residues 27–31, F46, D76, Y151, S206, and H319; that span reads RQAGR.

The protein belongs to the uroporphyrinogen decarboxylase family. Homodimer.

Its subcellular location is the cytoplasm. The enzyme catalyses uroporphyrinogen III + 4 H(+) = coproporphyrinogen III + 4 CO2. The protein operates within porphyrin-containing compound metabolism; protoporphyrin-IX biosynthesis; coproporphyrinogen-III from 5-aminolevulinate: step 4/4. Its function is as follows. Catalyzes the decarboxylation of four acetate groups of uroporphyrinogen-III to yield coproporphyrinogen-III. The protein is Uroporphyrinogen decarboxylase of Halalkalibacterium halodurans (strain ATCC BAA-125 / DSM 18197 / FERM 7344 / JCM 9153 / C-125) (Bacillus halodurans).